The chain runs to 332 residues: Glycerol-3-phosphate dehydrogenase [NAD(P)+] (332 aa).

NADPH contacts are provided by Ser11, Phe12, Lys32, and Lys106. Sn-glycerol 3-phosphate is bound by residues Lys106, Gly137, and Ser139. Ala141 serves as a coordination point for NADPH. Positions 192, 245, 255, 256, and 257 each coordinate sn-glycerol 3-phosphate. Lys192 acts as the Proton acceptor in catalysis. Position 256 (Arg256) interacts with NADPH. The NADPH site is built by Val280 and Glu282.

Belongs to the NAD-dependent glycerol-3-phosphate dehydrogenase family.

The protein resides in the cytoplasm. The catalysed reaction is sn-glycerol 3-phosphate + NAD(+) = dihydroxyacetone phosphate + NADH + H(+). It catalyses the reaction sn-glycerol 3-phosphate + NADP(+) = dihydroxyacetone phosphate + NADPH + H(+). It participates in membrane lipid metabolism; glycerophospholipid metabolism. In terms of biological role, catalyzes the reduction of the glycolytic intermediate dihydroxyacetone phosphate (DHAP) to sn-glycerol 3-phosphate (G3P), the key precursor for phospholipid synthesis. This is Glycerol-3-phosphate dehydrogenase [NAD(P)+] from Staphylococcus aureus (strain USA300).